The primary structure comprises 551 residues: Tetrachloroethene reductive dehalogenase (551 aa).

Positions 1 to 39 (MGEINRRNFLKVSILGAAAAAVASASAVKGMVSPLVADA) form a signal peptide, tat-type signal. A 4Fe-4S ferredoxin-type 1 domain is found at 411 to 440 (PRKFGVREFCRLCKKCADACPAQAISHEKD). [4Fe-4S] cluster-binding residues include C420, C423, C426, C430, C467, C478, C481, and C485. The 4Fe-4S ferredoxin-type 2 domain maps to 478–496 (CSNCVAVCSWNKVETWNHD).

Belongs to the PceA family. It depends on [4Fe-4S] cluster as a cofactor. The cofactor is corrinoid. In terms of processing, predicted to be exported by the Tat system. The position of the signal peptide cleavage has not been experimentally proven.

The protein localises to the cell membrane. It catalyses the reaction trichloroethene + chloride + A + H(+) = tetrachloroethene + AH2. The enzyme catalyses trichloroethene + AH2 = (Z)-1,2-dichloroethene + chloride + A + H(+). Its function is as follows. Catalyzes the reductive dechlorination of tetrachloroethene (PCE) to trichloroethene (TCE) and of trichloroethene to cis-1,2-dichloroethene (DCE). This Desulfitobacterium hafniense (Desulfitobacterium frappieri) protein is Tetrachloroethene reductive dehalogenase.